A 354-amino-acid chain; its full sequence is Trans-L-3-hydroxyproline dehydratase (354 aa).

The active-site Proton acceptor is C104. Residues 105 to 106 (GH), D269, and 274 to 275 (GS) contribute to the substrate site.

It belongs to the proline racemase family. In terms of assembly, homodimer.

The enzyme catalyses trans-3-hydroxy-L-proline = 1-pyrroline-2-carboxylate + H2O. In terms of biological role, catalyzes the dehydration of trans-3-hydroxy-L-proline to delta-1-pyrroline-2-carboxylate (Pyr2C). The chain is Trans-L-3-hydroxyproline dehydratase (L3HYPDH) from Pongo abelii (Sumatran orangutan).